Reading from the N-terminus, the 47-residue chain is Defensin Tk-AMP-D1.1 (47 aa).

Cystine bridges form between Cys3–Cys47, Cys14–Cys34, Cys20–Cys41, and Cys24–Cys43.

Its function is as follows. Plant defense peptide. This is Defensin Tk-AMP-D1.1 from Triticum kiharae (Wheat).